The sequence spans 443 residues: UDP-N-acetylmuramate--L-alanine ligase (443 aa).

An ATP-binding site is contributed by 110–116 (GAHGKTS).

It belongs to the MurCDEF family.

It localises to the cytoplasm. The enzyme catalyses UDP-N-acetyl-alpha-D-muramate + L-alanine + ATP = UDP-N-acetyl-alpha-D-muramoyl-L-alanine + ADP + phosphate + H(+). It participates in cell wall biogenesis; peptidoglycan biosynthesis. Functionally, cell wall formation. The protein is UDP-N-acetylmuramate--L-alanine ligase of Lactococcus lactis subsp. lactis (strain IL1403) (Streptococcus lactis).